The primary structure comprises 209 residues: uncharacterized protein (209 aa).

The protein localises to the plastid. The protein resides in the chloroplast. This is an uncharacterized protein from Porphyra purpurea (Red seaweed).